Consider the following 623-residue polypeptide: 1-deoxy-D-xylulose-5-phosphate synthase (623 aa).

Thiamine diphosphate contacts are provided by residues histidine 80 and glycine 121–serine 123. Mg(2+) is bound at residue aspartate 152. Residues glycine 153–alanine 154, asparagine 181, tyrosine 289, and glutamate 372 each bind thiamine diphosphate. Asparagine 181 lines the Mg(2+) pocket.

This sequence belongs to the transketolase family. DXPS subfamily. In terms of assembly, homodimer. It depends on Mg(2+) as a cofactor. The cofactor is thiamine diphosphate.

It carries out the reaction D-glyceraldehyde 3-phosphate + pyruvate + H(+) = 1-deoxy-D-xylulose 5-phosphate + CO2. The protein operates within metabolic intermediate biosynthesis; 1-deoxy-D-xylulose 5-phosphate biosynthesis; 1-deoxy-D-xylulose 5-phosphate from D-glyceraldehyde 3-phosphate and pyruvate: step 1/1. Functionally, catalyzes the acyloin condensation reaction between C atoms 2 and 3 of pyruvate and glyceraldehyde 3-phosphate to yield 1-deoxy-D-xylulose-5-phosphate (DXP). This chain is 1-deoxy-D-xylulose-5-phosphate synthase, found in Baumannia cicadellinicola subsp. Homalodisca coagulata.